Here is a 20-residue protein sequence, read N- to C-terminus: Toxin TpF21-Cocle (20 aa).

The 20-residue stretch at 1–20 folds into the LCN-type CS-alpha/beta domain; the sequence is KDGYLVGNDGCKYSCNTYPK.

Belongs to the long (4 C-C) scorpion toxin superfamily. Sodium channel inhibitor family. Beta subfamily. As to expression, expressed by the venom gland.

The protein resides in the secreted. Functionally, beta toxins bind voltage-independently at site-4 of sodium channels (Nav) and shift the voltage of activation toward more negative potentials thereby affecting sodium channel activation and promoting spontaneous and repetitive firing. This Tityus pachyurus (Colombian scorpion) protein is Toxin TpF21-Cocle.